The chain runs to 271 residues: ATP synthase subunit delta (271 aa).

Belongs to the ATPase delta chain family. As to quaternary structure, F-type ATPases have 2 components, F(1) - the catalytic core - and F(0) - the membrane proton channel. F(1) has five subunits: alpha(3), beta(3), gamma(1), delta(1), epsilon(1). F(0) has three main subunits: a(1), b(2) and c(10-14). The alpha and beta chains form an alternating ring which encloses part of the gamma chain. F(1) is attached to F(0) by a central stalk formed by the gamma and epsilon chains, while a peripheral stalk is formed by the delta and b chains.

The protein resides in the cell membrane. F(1)F(0) ATP synthase produces ATP from ADP in the presence of a proton or sodium gradient. F-type ATPases consist of two structural domains, F(1) containing the extramembraneous catalytic core and F(0) containing the membrane proton channel, linked together by a central stalk and a peripheral stalk. During catalysis, ATP synthesis in the catalytic domain of F(1) is coupled via a rotary mechanism of the central stalk subunits to proton translocation. Its function is as follows. This protein is part of the stalk that links CF(0) to CF(1). It either transmits conformational changes from CF(0) to CF(1) or is implicated in proton conduction. This chain is ATP synthase subunit delta, found in Streptomyces griseus subsp. griseus (strain JCM 4626 / CBS 651.72 / NBRC 13350 / KCC S-0626 / ISP 5235).